The sequence spans 286 residues: MNILSIQSWVCYGHVGNASAVFPLQLLGAEVWAVNTVQFSNHTGYGDWTGQVFGGDDIAALMKGIADRGVLPRCDAVLSGYMGSDAIGGAILDAVASVRAANPEALYCCDPVIGDTGRGIFVRPGLPELFRDRAVPTANILTPNQFELEWLTGHHCRTLADARAAVKVLAESMIRQGPRIILVTSLHVAETPSGSLDMLVYENGRFYLLRTPLLPVSINGAGDAIAALFLFHRLDTGDARQALEKAASSVYGLLKRTAEAGSMEILTVAARQEFLTPSTCFYAQIC.

Residue Ser-8 participates in substrate binding. 2 residues coordinate ATP: Asp-110 and Glu-147. Asp-223 contributes to the substrate binding site.

This sequence belongs to the pyridoxine kinase family. PdxY subfamily. In terms of assembly, homodimer. Mg(2+) serves as cofactor.

It carries out the reaction pyridoxal + ATP = pyridoxal 5'-phosphate + ADP + H(+). The protein operates within cofactor metabolism; pyridoxal 5'-phosphate salvage; pyridoxal 5'-phosphate from pyridoxal: step 1/1. Its function is as follows. Pyridoxal kinase involved in the salvage pathway of pyridoxal 5'-phosphate (PLP). Catalyzes the phosphorylation of pyridoxal to PLP. The polypeptide is Pyridoxal kinase PdxY (Granulibacter bethesdensis (strain ATCC BAA-1260 / CGDNIH1)).